A 188-amino-acid chain; its full sequence is Elongation factor P (188 aa).

The protein belongs to the elongation factor P family.

Its subcellular location is the cytoplasm. It functions in the pathway protein biosynthesis; polypeptide chain elongation. Functionally, involved in peptide bond synthesis. Stimulates efficient translation and peptide-bond synthesis on native or reconstituted 70S ribosomes in vitro. Probably functions indirectly by altering the affinity of the ribosome for aminoacyl-tRNA, thus increasing their reactivity as acceptors for peptidyl transferase. This Leptospira borgpetersenii serovar Hardjo-bovis (strain JB197) protein is Elongation factor P.